Consider the following 194-residue polypeptide: Sigma factor AlgU negative regulatory protein (194 aa).

The chain crosses the membrane as a helical span at residues 89–105 (LAVAASVTLAVLAGVRL).

The protein belongs to the RseA family.

The protein localises to the cell membrane. Its function is as follows. Negative regulator of the sigma factor AlgU. Plays a role in the differentiation of P.aeruginosa into the alginate-producing form. Inactivation of mucA causes a switch from the non-mucoid to mucoid state resulting in constitutive expression of alginate biosynthetic genes. The polypeptide is Sigma factor AlgU negative regulatory protein (mucA) (Pseudomonas aeruginosa (strain ATCC 15692 / DSM 22644 / CIP 104116 / JCM 14847 / LMG 12228 / 1C / PRS 101 / PAO1)).